The following is a 139-amino-acid chain: D-ribose pyranase (139 aa).

The active-site Proton donor is His-20. Substrate is bound by residues Asp-28, His-106, and Tyr-128–Asn-130.

The protein belongs to the RbsD / FucU family. RbsD subfamily. As to quaternary structure, homodecamer.

It localises to the cytoplasm. It carries out the reaction beta-D-ribopyranose = beta-D-ribofuranose. The protein operates within carbohydrate metabolism; D-ribose degradation; D-ribose 5-phosphate from beta-D-ribopyranose: step 1/2. Catalyzes the interconversion of beta-pyran and beta-furan forms of D-ribose. The chain is D-ribose pyranase from Histophilus somni (strain 2336) (Haemophilus somnus).